The primary structure comprises 379 residues: Subtilisin Carlsberg (379 aa).

The first 29 residues, 1–29, serve as a signal peptide directing secretion; the sequence is MMRKKSFWLGMLTAFMLVFTMAFSDSASA. Residues 30 to 105 constitute a propeptide that is removed on maturation; it reads AQPAKNVEKD…VEEDHVAHAL (76 aa). The 59-residue stretch at 44 to 102 folds into the Inhibitor I9 domain; it reads FKSGVKTASVKKDIIKESGGKVDKQFRIINAAKAKLDKEALKEVKNDPDVAYVEEDHVA. Q107 is a Ca(2+) binding site. The region spanning 110 to 378 is the Peptidase S8 domain; the sequence is PYGIPLIKAD…KGLINVEAAA (269 aa). D137 functions as the Charge relay system in the catalytic mechanism. D146 is a Ca(2+) binding site. H168 acts as the Charge relay system in catalysis. Ca(2+) is bound by residues L179, N181, T183, V185, A273, Y275, and V278. Residue S325 is the Charge relay system of the active site.

Belongs to the peptidase S8 family. Ca(2+) serves as cofactor.

The protein localises to the secreted. It carries out the reaction Hydrolysis of proteins with broad specificity for peptide bonds, and a preference for a large uncharged residue in P1. Hydrolyzes peptide amides.. With respect to regulation, inhibited by p-chlorophenyl and 1-naphthyl boronic acid derivatives. Functionally, subtilisin is an extracellular alkaline serine protease, it catalyzes the hydrolysis of proteins and peptide amides. Shows high specificity for aromatic and hydrophobic amino acids in the P1 substrate position. May play an important role in the degradation of feather keratin. This is Subtilisin Carlsberg from Bacillus licheniformis.